A 123-amino-acid polypeptide reads, in one-letter code: Small ribosomal subunit protein uS13 (123 aa).

Positions 93-123 (HRKGLPVRGQNTKNNARTRKGPAKAIAGKKK) are disordered. The segment covering 108–123 (ARTRKGPAKAIAGKKK) has biased composition (basic residues).

This sequence belongs to the universal ribosomal protein uS13 family. As to quaternary structure, part of the 30S ribosomal subunit. Forms a loose heterodimer with protein S19. Forms two bridges to the 50S subunit in the 70S ribosome.

Its function is as follows. Located at the top of the head of the 30S subunit, it contacts several helices of the 16S rRNA. In the 70S ribosome it contacts the 23S rRNA (bridge B1a) and protein L5 of the 50S subunit (bridge B1b), connecting the 2 subunits; these bridges are implicated in subunit movement. Contacts the tRNAs in the A and P-sites. This Leuconostoc citreum (strain KM20) protein is Small ribosomal subunit protein uS13.